We begin with the raw amino-acid sequence, 98 residues long: DNA-binding protein Fis (98 aa).

Residues glutamine 74–lysine 93 constitute a DNA-binding region (H-T-H motif).

This sequence belongs to the transcriptional regulatory Fis family. In terms of assembly, homodimer.

In terms of biological role, activates ribosomal RNA transcription. Plays a direct role in upstream activation of rRNA promoters. The polypeptide is DNA-binding protein Fis (Enterobacter sp. (strain 638)).